The sequence spans 1141 residues: Putative late blight resistance protein homolog R1B-13 (1141 aa).

Positions 417-437 form a coiled coil; that stretch reads DSLAFLKNQIQVIQMEFEILQ. In terms of domain architecture, NB-ARC spans 516–742; it reads TVITHTSSQL…LSIVLVADVL (227 aa). LRR repeat units lie at residues 826–851, 869–894, 992–1016, 1017–1041, and 1043–1068; these read FKFL…PYLR, LWNL…VWDM, APNL…TVDH, LKHL…VSNG, and FPQL…AFPI.

It belongs to the disease resistance NB-LRR family.

The protein resides in the cytoplasm. It localises to the membrane. In terms of biological role, confers resistance to late blight (Phytophthora infestans) races carrying the avirulence gene Avr1. Resistance proteins guard the plant against pathogens that contain an appropriate avirulence protein via an indirect interaction with this avirulence protein. That triggers a defense system including the hypersensitive response, which restricts the pathogen growth. The protein is Putative late blight resistance protein homolog R1B-13 (R1B-13) of Solanum demissum (Wild potato).